A 309-amino-acid polypeptide reads, in one-letter code: Glycine-rich RNA-binding protein 3, mitochondrial (309 aa).

Residues 1 to 37 (MAFLSKFGNILKQTTNKQLNAQVSLSSPSLFQAIRCM) constitute a mitochondrion transit peptide. Residues 40-118 (SKLFIGGMAY…RVVKVNYAND (79 aa)) enclose the RRM domain. The tract at residues 247-309 (FAGDSQFGGS…GEFEDVAKRA (63 aa)) is disordered. Over residues 258–273 (VGNSSQFGGDNTQFTA) the composition is skewed to polar residues.

It belongs to the GR-RBP family. As to quaternary structure, homodimer. Interacts with ORRM2 and MORF8/RIP1. Interacts with RBG5/ORRM4. Binds to RBG2/ORRM5.

Its subcellular location is the mitochondrion. Functionally, possibly has a role in RNA transcription or processing during stress. Involved in C-to-U editing of mitochondrial RNA. Functions as a minor mitochondrial editing factor. Controls 6 percent of the mitochondrial editing sites. This chain is Glycine-rich RNA-binding protein 3, mitochondrial, found in Arabidopsis thaliana (Mouse-ear cress).